Here is a 690-residue protein sequence, read N- to C-terminus: DNA ligase (690 aa).

NAD(+) is bound by residues 36 to 40, 85 to 86, and Glu124; these read DSVYD and SL. Catalysis depends on Lys126, which acts as the N6-AMP-lysine intermediate. NAD(+) contacts are provided by Arg147, Glu184, Lys308, and Lys332. Positions 426, 429, 444, and 449 each coordinate Zn(2+). The BRCT domain occupies 614–690; that stretch reads NQSNVFDGKS…INENELKLLL (77 aa).

It belongs to the NAD-dependent DNA ligase family. LigA subfamily. It depends on Mg(2+) as a cofactor. Requires Mn(2+) as cofactor.

It catalyses the reaction NAD(+) + (deoxyribonucleotide)n-3'-hydroxyl + 5'-phospho-(deoxyribonucleotide)m = (deoxyribonucleotide)n+m + AMP + beta-nicotinamide D-nucleotide.. DNA ligase that catalyzes the formation of phosphodiester linkages between 5'-phosphoryl and 3'-hydroxyl groups in double-stranded DNA using NAD as a coenzyme and as the energy source for the reaction. It is essential for DNA replication and repair of damaged DNA. This is DNA ligase from Prochlorococcus marinus (strain NATL2A).